The following is a 203-amino-acid chain: Probable GTP-binding protein EngB (203 aa).

An EngB-type G domain is found at 21–196 (GAPEIAFLGR…WKKIFEAAGT (176 aa)). GTP contacts are provided by residues 29-36 (GRSNVGKS), 55-59 (GRTQT), 79-82 (DLPG), 146-149 (TKID), and 175-177 (FSA). Positions 36 and 57 each coordinate Mg(2+).

Belongs to the TRAFAC class TrmE-Era-EngA-EngB-Septin-like GTPase superfamily. EngB GTPase family. Mg(2+) is required as a cofactor.

Necessary for normal cell division and for the maintenance of normal septation. The polypeptide is Probable GTP-binding protein EngB (Koribacter versatilis (strain Ellin345)).